The primary structure comprises 357 residues: Phenylalanine--tRNA ligase alpha subunit (357 aa).

A Mg(2+)-binding site is contributed by glutamate 257.

Belongs to the class-II aminoacyl-tRNA synthetase family. Phe-tRNA synthetase alpha subunit type 1 subfamily. In terms of assembly, tetramer of two alpha and two beta subunits. Mg(2+) is required as a cofactor.

The protein localises to the cytoplasm. It carries out the reaction tRNA(Phe) + L-phenylalanine + ATP = L-phenylalanyl-tRNA(Phe) + AMP + diphosphate + H(+). The chain is Phenylalanine--tRNA ligase alpha subunit from Ruegeria pomeroyi (strain ATCC 700808 / DSM 15171 / DSS-3) (Silicibacter pomeroyi).